The primary structure comprises 44 residues: Large ribosomal subunit protein bL34 (44 aa).

It belongs to the bacterial ribosomal protein bL34 family.

This chain is Large ribosomal subunit protein bL34, found in Wolbachia sp. subsp. Brugia malayi (strain TRS).